Reading from the N-terminus, the 117-residue chain is Immunoglobulin lambda variable 10-54 (117 aa).

Positions 1-21 (MPWALLLLTLLTHSAVSVVQA) are cleaved as a signal peptide. The segment at 20–43 (QAGLTQPPSVSKGLRQTATLTCTG) is framework-1. The region spanning 22–117 (GLTQPPSVSK…CSALDSSLSA (96 aa)) is the Ig-like domain. A disulfide bridge links Cys41 with Cys108. A complementarity-determining-1 region spans residues 44 to 52 (NSNIVGNQG). The framework-2 stretch occupies residues 53 to 69 (AAWLQQHQGHPPKLLSY). The tract at residues 70 to 72 (RNN) is complementarity-determining-2. The segment at 73 to 108 (NRPSGISERFSASRSGNTASLTITGLQPEDEADYYC) is framework-3. The tract at residues 109 to 117 (SALDSSLSA) is complementarity-determining-3.

In terms of assembly, immunoglobulins are composed of two identical heavy chains and two identical light chains; disulfide-linked.

The protein localises to the secreted. The protein resides in the cell membrane. Its function is as follows. V region of the variable domain of immunoglobulin light chains that participates in the antigen recognition. Immunoglobulins, also known as antibodies, are membrane-bound or secreted glycoproteins produced by B lymphocytes. In the recognition phase of humoral immunity, the membrane-bound immunoglobulins serve as receptors which, upon binding of a specific antigen, trigger the clonal expansion and differentiation of B lymphocytes into immunoglobulins-secreting plasma cells. Secreted immunoglobulins mediate the effector phase of humoral immunity, which results in the elimination of bound antigens. The antigen binding site is formed by the variable domain of one heavy chain, together with that of its associated light chain. Thus, each immunoglobulin has two antigen binding sites with remarkable affinity for a particular antigen. The variable domains are assembled by a process called V-(D)-J rearrangement and can then be subjected to somatic hypermutations which, after exposure to antigen and selection, allow affinity maturation for a particular antigen. This is Immunoglobulin lambda variable 10-54 from Homo sapiens (Human).